The following is a 627-amino-acid chain: (R)-linalool synthase 1, chloroplastic (627 aa).

The N-terminal 21 residues, 1-21, are a transit peptide targeting the chloroplast; that stretch reads MAFVSIAPLASRCCVHKSFVS. Asp-378, Asp-382, and Glu-530 together coordinate Mg(2+). A DDXXD motif motif is present at residues 378 to 382; it reads DDIYD.

The protein belongs to the terpene synthase family. Tpsd subfamily. It depends on Mg(2+) as a cofactor. Requires Mn(2+) as cofactor.

It localises to the plastid. The protein resides in the chloroplast. It carries out the reaction (2E)-geranyl diphosphate + H2O = (R)-linalool + diphosphate. Its pathway is terpene metabolism; oleoresin biosynthesis. Functionally, terpene synthase (TPS) involved in the biosynthesis of monoterpene natural products included in conifer oleoresin secretions and volatile emissions; these compounds contribute to biotic and abiotic stress defense against herbivores and pathogens. Catalyzes the conversion of (2E)-geranyl diphosphate (GPP) to (R)-linalool. The protein is (R)-linalool synthase 1, chloroplastic of Picea sitchensis (Sitka spruce).